The sequence spans 445 residues: GTPase Der (445 aa).

EngA-type G domains lie at 3-167 (PVIA…YAGE) and 180-353 (IKIA…AAAM). GTP contacts are provided by residues 9–16 (GRPNVGKS), 56–60 (DTGGF), 119–122 (NKAE), 186–193 (GRPNVGKS), 233–237 (DTAGL), and 298–301 (NKWD). One can recognise a KH-like domain in the interval 354–438 (KKLPTPKLTR…PLRIEFRSST (85 aa)).

It belongs to the TRAFAC class TrmE-Era-EngA-EngB-Septin-like GTPase superfamily. EngA (Der) GTPase family. As to quaternary structure, associates with the 50S ribosomal subunit.

GTPase that plays an essential role in the late steps of ribosome biogenesis. This is GTPase Der from Burkholderia pseudomallei (strain 1106a).